Consider the following 508-residue polypeptide: Protein phosphatase PP2A regulatory subunit B (508 aa).

WD repeat units lie at residues 19–58, 81–122, 166–204, 215–255, 274–312, and 329–370; these read TEAD…KKQS, EIEE…IKLV, AHAY…QSFN, ELTE…LCDS, EITS…KPIK, and ENDA…GNDD. Positions 369-466 are disordered; that stretch reads DDKPKFKSAF…MRRRMTSGVG (98 aa). The span at 396 to 418 shows a compositional bias: acidic residues; it reads DDDDDDDDDDDDEEADDEFDEEV. A compositionally biased stretch (basic residues) spans 447-461; sequence FKSKKSGQHPMRRRM. The WD 7 repeat unit spans residues 477–507; the sequence is DFKKSILHLSWHPRENSVAIAATNNLYIFST.

The protein belongs to the phosphatase 2A regulatory subunit B family. PP2A exists in several trimeric forms, all of which consist of a core composed of a catalytic subunit associated with a 65 kDa (PR65) (Subunit A) and a 55 kDa (PR55) (Subunit B) regulatory subunit.

Its function is as follows. Phosphatase 2A affects a variety of biological processes in the cell such as transcription, cell cycle progression and cellular morphogenesis, and provides an initial identification of critical substrates for this phosphatase. The regulatory subunit may direct the catalytic subunit to distinct, albeit overlapping, subsets of substrates. The protein is Protein phosphatase PP2A regulatory subunit B (CDC55) of Candida tropicalis (Yeast).